The chain runs to 540 residues: Chaperonin GroEL (540 aa).

ATP contacts are provided by residues 29-32 (TLGP), 86-90 (DGTTT), Gly-413, and Asp-493. The disordered stretch occupies residues 520–540 (AEKPEPKPAPGPADPGAGMDF).

This sequence belongs to the chaperonin (HSP60) family. As to quaternary structure, forms a cylinder of 14 subunits composed of two heptameric rings stacked back-to-back. Interacts with the co-chaperonin GroES.

Its subcellular location is the cytoplasm. It carries out the reaction ATP + H2O + a folded polypeptide = ADP + phosphate + an unfolded polypeptide.. Together with its co-chaperonin GroES, plays an essential role in assisting protein folding. The GroEL-GroES system forms a nano-cage that allows encapsulation of the non-native substrate proteins and provides a physical environment optimized to promote and accelerate protein folding. This chain is Chaperonin GroEL, found in Tropheryma whipplei (strain TW08/27) (Whipple's bacillus).